The following is a 378-amino-acid chain: Putative dioxygenase VC_1345 (378 aa).

Residues H288, D294, and H324 each contribute to the Fe cation site.

This sequence belongs to the homogentisate dioxygenase family. Fe cation serves as cofactor.

The polypeptide is Putative dioxygenase VC_1345 (Vibrio cholerae serotype O1 (strain ATCC 39315 / El Tor Inaba N16961)).